The sequence spans 576 residues: Proline--tRNA ligase (576 aa).

Belongs to the class-II aminoacyl-tRNA synthetase family. ProS type 1 subfamily. In terms of assembly, homodimer.

It is found in the cytoplasm. The catalysed reaction is tRNA(Pro) + L-proline + ATP = L-prolyl-tRNA(Pro) + AMP + diphosphate. Catalyzes the attachment of proline to tRNA(Pro) in a two-step reaction: proline is first activated by ATP to form Pro-AMP and then transferred to the acceptor end of tRNA(Pro). As ProRS can inadvertently accommodate and process non-cognate amino acids such as alanine and cysteine, to avoid such errors it has two additional distinct editing activities against alanine. One activity is designated as 'pretransfer' editing and involves the tRNA(Pro)-independent hydrolysis of activated Ala-AMP. The other activity is designated 'posttransfer' editing and involves deacylation of mischarged Ala-tRNA(Pro). The misacylated Cys-tRNA(Pro) is not edited by ProRS. In Helicobacter pylori (strain J99 / ATCC 700824) (Campylobacter pylori J99), this protein is Proline--tRNA ligase.